Here is a 372-residue protein sequence, read N- to C-terminus: Peptidyl-prolyl cis-trans isomerase D (372 aa).

Positions 14-178 constitute a PPIase cyclophilin-type domain; it reads YFDISIGGKS…KEALIVDCGE (165 aa). TPR repeat units lie at residues 219–252, 271–304, and 309–342; these read AKASKDYGNTAFKSGNYSLGLDKYQKGLRYINEE, FSLNNNSALLNIKLEAWDDAARSASAALEVGGVK, and AKAFYRRGLANIHLKDEEAAVRDLTEANKLAPND.

This sequence belongs to the cyclophilin-type PPIase family. PPIase D subfamily.

The protein resides in the cytoplasm. It carries out the reaction [protein]-peptidylproline (omega=180) = [protein]-peptidylproline (omega=0). In terms of biological role, PPIases accelerate the folding of proteins. It catalyzes the cis-trans isomerization of proline imidic peptide bonds in oligopeptides. The polypeptide is Peptidyl-prolyl cis-trans isomerase D (CPR6) (Gibberella zeae (strain ATCC MYA-4620 / CBS 123657 / FGSC 9075 / NRRL 31084 / PH-1) (Wheat head blight fungus)).